The primary structure comprises 458 residues: Glutamyl-tRNA reductase (458 aa).

Residues 49–52 (TCNR), Ser111, 116–118 (ETE), and Gln122 each bind substrate. The Nucleophile role is filled by Cys50. 191–196 (GAGKMS) provides a ligand contact to NADP(+). Basic and acidic residues-rich tracts occupy residues 426-440 (IPKD…KEVE) and 448-458 (ERGHHESDFHN). A disordered region spans residues 426-458 (IPKDGEEHSSSKEVESVTQSSTERGHHESDFHN).

This sequence belongs to the glutamyl-tRNA reductase family. In terms of assembly, homodimer.

The enzyme catalyses (S)-4-amino-5-oxopentanoate + tRNA(Glu) + NADP(+) = L-glutamyl-tRNA(Glu) + NADPH + H(+). The protein operates within porphyrin-containing compound metabolism; protoporphyrin-IX biosynthesis; 5-aminolevulinate from L-glutamyl-tRNA(Glu): step 1/2. Functionally, catalyzes the NADPH-dependent reduction of glutamyl-tRNA(Glu) to glutamate 1-semialdehyde (GSA). In Natranaerobius thermophilus (strain ATCC BAA-1301 / DSM 18059 / JW/NM-WN-LF), this protein is Glutamyl-tRNA reductase.